The sequence spans 142 residues: 3-hydroxyacyl-[acyl-carrier-protein] dehydratase FabZ (142 aa).

His47 is an active-site residue.

This sequence belongs to the thioester dehydratase family. FabZ subfamily.

The protein localises to the cytoplasm. The enzyme catalyses a (3R)-hydroxyacyl-[ACP] = a (2E)-enoyl-[ACP] + H2O. Its function is as follows. Involved in unsaturated fatty acids biosynthesis. Catalyzes the dehydration of short chain beta-hydroxyacyl-ACPs and long chain saturated and unsaturated beta-hydroxyacyl-ACPs. The chain is 3-hydroxyacyl-[acyl-carrier-protein] dehydratase FabZ from Thermoanaerobacter sp. (strain X514).